Consider the following 330-residue polypeptide: Ketol-acid reductoisomerase (NADP(+)) (330 aa).

The region spanning 1-181 (MNVYYEQDAD…GGTKAGVIET (181 aa)) is the KARI N-terminal Rossmann domain. NADP(+)-binding positions include 24–27 (YGSQ), Arg47, Ser50, Ser52, and 82–85 (DQTQ). Residue His107 is part of the active site. Gly133 is an NADP(+) binding site. The region spanning 182–327 (NFKDETETDL…AKLRNMMSWL (146 aa)) is the KARI C-terminal knotted domain. Residues Asp190, Glu194, Glu226, and Glu230 each contribute to the Mg(2+) site. Ser251 provides a ligand contact to substrate.

Belongs to the ketol-acid reductoisomerase family. Mg(2+) serves as cofactor.

The enzyme catalyses (2R)-2,3-dihydroxy-3-methylbutanoate + NADP(+) = (2S)-2-acetolactate + NADPH + H(+). It catalyses the reaction (2R,3R)-2,3-dihydroxy-3-methylpentanoate + NADP(+) = (S)-2-ethyl-2-hydroxy-3-oxobutanoate + NADPH + H(+). Its pathway is amino-acid biosynthesis; L-isoleucine biosynthesis; L-isoleucine from 2-oxobutanoate: step 2/4. It participates in amino-acid biosynthesis; L-valine biosynthesis; L-valine from pyruvate: step 2/4. Involved in the biosynthesis of branched-chain amino acids (BCAA). Catalyzes an alkyl-migration followed by a ketol-acid reduction of (S)-2-acetolactate (S2AL) to yield (R)-2,3-dihydroxy-isovalerate. In the isomerase reaction, S2AL is rearranged via a Mg-dependent methyl migration to produce 3-hydroxy-3-methyl-2-ketobutyrate (HMKB). In the reductase reaction, this 2-ketoacid undergoes a metal-dependent reduction by NADPH to yield (R)-2,3-dihydroxy-isovalerate. This Chlorobium luteolum (strain DSM 273 / BCRC 81028 / 2530) (Pelodictyon luteolum) protein is Ketol-acid reductoisomerase (NADP(+)).